An 872-amino-acid chain; its full sequence is MRDFYVRVTILVTGLCFVETVTTPSRKSSVSFNPEYQRNGDLLVNWSSIRHVSQNTDAMDRSFYFFRVLFQPHTQKERHIKPPDRTHHRISKVTLDPLAHLHALEILNLSNKAIHYFSLDQPLPPSSHQKRHGGHSHSRLPRLQVLILQRNQLSGTPKGLWKLKSLRSLDLSFNRIVHIGLSDFHGCLQLESIYLKSNKICTIHPKAFKGLKKLQVVDLRSNALTTLVPIVTIALELPHLELGLADNQWQCSESNVNFQNITSSSWREIWKAICNMSVENKRPNAETHQIRKSRDTHLLLSPPSDLKSLIQSKAERPQAGMDMHLSALGKEAKDGYGDLRGMWPQSPVELRDSQDEQVTDRKDDKPPALELAICLSVFITFVVAFCLGAFARPYIDRLRQQRCSNKRPGSDNAYSNKGFHGDIEGAQHMEYQGTDLHQTTHHLHLSENQNPSWVAEPIPHSAVQSEQMLGSNGTDPGHQQSPEQLKDSNESRSGDSIVLPSGPVAHLALHGLPNADAHKAISPVQHHHDFLEEAHYDTVAQEYSLIDDVMDRSSITGPLGTFPSSVESRRDDLHPSQPRDVVASFSKTLAHANTREAEGSMETGCPEPLGAMDSQMGSSEERQVSNSIRELATQQPSFQGVDAEERLSHVYSEVLHNDPPSLRPRWGSGHYVIPATGEPVERDAPFDPHYDLVTNYESDSDEGSLFTLSSEGSEDTRSLAEEQASVENDGTSQPLPSRNLGEYKDSVTSAESVEDLTSQRIPEKCEAQEAHLRNTLISGPDSCVCETNQENDSSSLDPENRSTWPQLPGHKLSHHETLGTYGDIEPQSEAVDWHYSLRDLESPNVDSSPSPPYSDEDLSGPEDRARKRSKHW.

The helical transmembrane segment at 4–24 (FYVRVTILVTGLCFVETVTTP) threads the bilayer. Asn45 and Asn108 each carry an N-linked (GlcNAc...) asparagine glycan. LRR repeat units follow at residues 142–164 (RLQV…WKLK), 165–186 (SLRS…DFHG), 189–210 (QLES…AFKG), 213–234 (KLQV…VTIA), and 239–259 (HLEL…VNFQ). The interval 339–363 (LRGMWPQSPVELRDSQDEQVTDRKD) is disordered. Over residues 349 to 363 (ELRDSQDEQVTDRKD) the composition is skewed to basic and acidic residues. Residues 371-391 (LAICLSVFITFVVAFCLGAFA) traverse the membrane as a helical segment. Positions 467 to 483 (QMLGSNGTDPGHQQSPE) are enriched in polar residues. Disordered stretches follow at residues 467 to 501 (QMLG…VLPS), 560 to 579 (GTFP…SQPR), 695 to 761 (NYES…SQRI), and 776 to 872 (LISG…SKHW). Residue Asn472 is glycosylated (N-linked (GlcNAc...) asparagine). Residues 484–493 (QLKDSNESRS) show a composition bias toward basic and acidic residues. Phosphoserine is present on Ser718. 3 stretches are compositionally biased toward polar residues: residues 725-736 (SVENDGTSQPLP), 746-760 (SVTS…TSQR), and 785-805 (CETN…STWP). At Ser752 the chain carries Phosphoserine. The span at 831–841 (VDWHYSLRDLE) shows a compositional bias: basic and acidic residues.

It is found in the membrane. This chain is Leucine-rich repeat-containing protein 66 (Lrrc66), found in Mus musculus (Mouse).